A 434-amino-acid polypeptide reads, in one-letter code: Glycylpeptide N-tetradecanoyltransferase 1 (434 aa).

The disordered stretch occupies residues 1–24; the sequence is MADNNSPPGSVEQKADQIVEANPL. Position 2 is an N-acetylalanine (Ala-2). Tetradecanoyl-CoA contacts are provided by residues 48–51, 184–186, and 192–196; these read HKFW, LCV, and SKRLA. Leu-434 serves as the catalytic Proton acceptor; via carboxylate.

Belongs to the NMT family. In terms of tissue distribution, expressed ubiquitously, with higher levels in young tissues (at protein level).

The protein localises to the cytoplasm. The catalysed reaction is N-terminal glycyl-[protein] + tetradecanoyl-CoA = N-tetradecanoylglycyl-[protein] + CoA + H(+). Adds a myristoyl group to the N-terminal glycine residue of certain cellular proteins. Can also use decanoyl-CoA and lauroyl-CoA as substrates. This is Glycylpeptide N-tetradecanoyltransferase 1 (NMT1) from Arabidopsis thaliana (Mouse-ear cress).